The primary structure comprises 313 residues: Oxaloacetate tautomerase Fahd2a, mitochondrial (313 aa).

A mitochondrion-targeting transit peptide spans 1 to 84; that stretch reads MLGSGRRRLL…TALSVARRAL (84 aa). Glu159, Glu161, and Asp190 together coordinate Mg(2+). The residue at position 202 (Lys202) is an N6-acetyllysine; alternate. At Lys202 the chain carries N6-succinyllysine; alternate. An N6-acetyllysine modification is found at Lys233.

The protein belongs to the FAH family. Mg(2+) is required as a cofactor. The cofactor is Mn(2+).

It is found in the mitochondrion. The catalysed reaction is oxaloacetate = enol-oxaloacetate. Functionally, tautomerase that converts enol-oxaloacetate, a strong inhibitor of succinate dehydrogenase, to the physiological keto form of oxaloacetate. It is thereby required to maximize aerobic respiration efficiency by preventing succinate dehydrogenase inhibition. This Rattus norvegicus (Rat) protein is Oxaloacetate tautomerase Fahd2a, mitochondrial.